We begin with the raw amino-acid sequence, 497 residues long: Glycerol kinase (497 aa).

Residue threonine 13 coordinates ADP. 3 residues coordinate ATP: threonine 13, threonine 14, and serine 15. Residue threonine 13 coordinates sn-glycerol 3-phosphate. Arginine 17 lines the ADP pocket. Arginine 83, glutamate 84, and tyrosine 135 together coordinate sn-glycerol 3-phosphate. Residues arginine 83, glutamate 84, and tyrosine 135 each contribute to the glycerol site. Phosphohistidine; by HPr is present on histidine 231. Aspartate 245 contacts sn-glycerol 3-phosphate. Glycerol is bound by residues aspartate 245 and glutamine 246. The ADP site is built by threonine 267 and glycine 310. Residues threonine 267, glycine 310, glutamine 314, and glycine 411 each contribute to the ATP site. 2 residues coordinate ADP: glycine 411 and asparagine 415.

The protein belongs to the FGGY kinase family. Homotetramer and homodimer (in equilibrium). Post-translationally, the phosphoenolpyruvate-dependent sugar phosphotransferase system (PTS), including enzyme I, and histidine-containing protein (HPr) are required for the phosphorylation, which leads to the activation of the enzyme.

It carries out the reaction glycerol + ATP = sn-glycerol 3-phosphate + ADP + H(+). It participates in polyol metabolism; glycerol degradation via glycerol kinase pathway; sn-glycerol 3-phosphate from glycerol: step 1/1. With respect to regulation, activated by phosphorylation and inhibited by fructose 1,6-bisphosphate (FBP). Key enzyme in the regulation of glycerol uptake and metabolism. Catalyzes the phosphorylation of glycerol to yield sn-glycerol 3-phosphate. This chain is Glycerol kinase, found in Halalkalibacterium halodurans (strain ATCC BAA-125 / DSM 18197 / FERM 7344 / JCM 9153 / C-125) (Bacillus halodurans).